Here is a 644-residue protein sequence, read N- to C-terminus: Threonine--tRNA ligase (644 aa).

The TGS domain occupies 1 to 61 (MVAITLPDGN…TQDASVEIVT (61 aa)). The tract at residues 242–533 (DHRKIGKALN…LIEHYAGWMP (292 aa)) is catalytic. 3 residues coordinate Zn(2+): Cys-333, His-384, and His-510.

It belongs to the class-II aminoacyl-tRNA synthetase family. As to quaternary structure, homodimer. Zn(2+) is required as a cofactor.

It is found in the cytoplasm. It catalyses the reaction tRNA(Thr) + L-threonine + ATP = L-threonyl-tRNA(Thr) + AMP + diphosphate + H(+). Its function is as follows. Catalyzes the attachment of threonine to tRNA(Thr) in a two-step reaction: L-threonine is first activated by ATP to form Thr-AMP and then transferred to the acceptor end of tRNA(Thr). Also edits incorrectly charged L-seryl-tRNA(Thr). The protein is Threonine--tRNA ligase of Psychrobacter sp. (strain PRwf-1).